Reading from the N-terminus, the 394-residue chain is Potassium channel subfamily K member 18 (394 aa).

Residues 1 to 31 (MEAEEPPEARRCCPEALGKARGCCPEALGKL) are Cytoplasmic-facing. Residues 32–52 (LPGLCFLCCLVTYALVGAALF) form a helical membrane-spanning segment. N-linked (GlcNAc...) asparagine glycosylation occurs at N83. Residues 114–140 (FLSALFFCCTVFSTVGYGHMYPVTRLG) constitute an intramembrane region (pore-forming). Positions 127, 128, 129, and 130 each coordinate K(+). The segment at 127–132 (TVGYGH) is selectivity filter 1. The helical transmembrane segment at 142 to 162 (FLCMLYALFGIPLMFLVLTDI) threads the bilayer. The Cytoplasmic portion of the chain corresponds to 163–292 (GDILATILSR…EVGQQVERLD (130 aa)). The segment at 210–215 (PQIVID) is interaction with calcineurin. Positions 261–266 (RSNSCP) are interaction with YWHAH. 2 positions are modified to phosphoserine: S264 and S276. A helical transmembrane segment spans residues 293–313 (IPLPVIALVVFAYISCAAAIL). The pore-forming intramembrane region spans 326-340 (FYFCFVTLTTIGFGD). Residues 335 to 340 (TIGFGD) are selectivity filter 2. A helical transmembrane segment spans residues 347-367 (HFFLFFSIYIIVGMEILFIAF). At 368–394 (KLMQNRLLHTYKTLMLFVCQREVSLPW) the chain is on the cytoplasmic side.

This sequence belongs to the two pore domain potassium channel (TC 1.A.1.8) family. As to quaternary structure, homodimer. Heterodimer with KCNK2. Heterodimer with KCNK10. Interacts with calcineurin. Interacts with YWHAH, in a phosphorylation-dependent manner. Post-translationally, phosphorylation of Ser-264 is required for the binding of 14-3-3eta/YWHAH. Calcineurin-mediated dephosphorylation of Ser-276 enhances channel activity. N-glycosylated. As to expression, detected in brain cortex, cerebellum, dorsal root ganglion, spinal cord and testis. High expression in trigeminal ganglion (at protein level), also expressed in autonomic nervous system ganglia such as the stellate ganglion and paravertebral sympathetic ganglia. Expressed in all adult spinal cord and brain regions, with slightly higher expression in thalamus, hypothalamus, hippocampus and posterior corte (at protein level). In non-neuronal tissues, substantial expression found in lung and heart and weal expression in liver, testis, kidney, small intestine and spleen. Expressed in regulatory T cells (at protein level).

Its subcellular location is the cell membrane. The enzyme catalyses K(+)(in) = K(+)(out). Activated upon cell stimulation via Ca(2+)-mobilizing receptors, such as CHRM1/M1 muscarinic receptor and AGTR1/AT1a angiotensin receptor. Activated by volatile anesthetics, such as isoflurane and inhibited by local anesthetics such as bupivacaine and lidocaine. Inhibited by extracellular acidic pH. Inhibited by Zn(2+) ions. Inhibited by hydroxy-alpha-sanshool, an ingredient of Schezuan pepper. Inhibited by Ba(2+) ions. Functionally, k(+) channel that conducts outward and inward rectifying currents at depolarized and hyperpolarized membrane potentials, respectively. The outward rectifying currents are voltage-dependent, coupled to K(+) electrochemical gradient across the membrane, whereas the inward currents can be induced in response to activation of Ca(2+)-mobilizing receptors. Homo- and heterodimerizes to form functional channels with distinct regulatory and gating properties. In trigeminal ganglia sensory neurons, the heterodimers of KCNK18/TRESK and KCNK2/TREK-1 or KCNK10/TREK-2 inhibit neuronal firing and neurogenic inflammation by stabilizing the resting membrane potential at K(+) equilibrium potential as well as by regulating the threshold of action potentials and the spike frequency. In thymocytes, conducts K(+) currents upon T cell receptor (TCR) signaling leading to sustained Ca(2+) influx and NF-kappa-B activation, FOXP3 transcription and positive selection of regulatory T cell (Treg) progenitor subsets. Appears to mediate the analgesics effects of hydroxy-alpha-sanshool, a metabolite naturally present in Schezuan pepper and other Xanthoxylum plants. This is Potassium channel subfamily K member 18 from Mus musculus (Mouse).